The sequence spans 71 residues: Translation initiation factor IF-1 (71 aa).

One can recognise an S1-like domain in the interval 1–71 (MSKDDLIQFT…LTKGRVIHRH (71 aa)).

It belongs to the IF-1 family. In terms of assembly, component of the 30S ribosomal translation pre-initiation complex which assembles on the 30S ribosome in the order IF-2 and IF-3, IF-1 and N-formylmethionyl-tRNA(fMet); mRNA recruitment can occur at any time during PIC assembly.

The protein localises to the cytoplasm. In terms of biological role, one of the essential components for the initiation of protein synthesis. Stabilizes the binding of IF-2 and IF-3 on the 30S subunit to which N-formylmethionyl-tRNA(fMet) subsequently binds. Helps modulate mRNA selection, yielding the 30S pre-initiation complex (PIC). Upon addition of the 50S ribosomal subunit IF-1, IF-2 and IF-3 are released leaving the mature 70S translation initiation complex. This is Translation initiation factor IF-1 from Rickettsia canadensis (strain McKiel).